Consider the following 288-residue polypeptide: Chitinase 5 (288 aa).

The first 29 residues, 1-29 (MANSPTPTMLAFLALGLALLLSATGQASA), serve as a signal peptide directing secretion. The region spanning 30 to 64 (QNCGCQSNMCCSKWGYCGTGKDYCGDGCRSGPCYG) is the Chitin-binding type-1 domain. 7 disulfide bridges follow: Cys-32–Cys-40, Cys-34–Cys-46, Cys-39–Cys-53, Cys-57–Cys-62, Cys-107–Cys-156, Cys-169–Cys-178, and Cys-256–Cys-288. Glu-151 serves as the catalytic Proton donor.

The protein belongs to the glycosyl hydrolase 19 family. Chitinase class IV subfamily. As to expression, expressed in sheaths and meristems and at lower levels in roots and leaves.

It carries out the reaction Random endo-hydrolysis of N-acetyl-beta-D-glucosaminide (1-&gt;4)-beta-linkages in chitin and chitodextrins.. In terms of biological role, may function in reproductive organs during embryogenesis and seed maturation. The polypeptide is Chitinase 5 (Cht5) (Oryza sativa subsp. japonica (Rice)).